Here is a 122-residue protein sequence, read N- to C-terminus: Probable non-specific lipid-transfer protein 3 (122 aa).

The first 29 residues, 1–29 (MARLNSKAVAAAVVLAAVVLMMAGREASA), serve as a signal peptide directing secretion. 4 disulfide bridges follow: cysteine 33–cysteine 81, cysteine 43–cysteine 58, cysteine 59–cysteine 104, and cysteine 79–cysteine 118.

Belongs to the plant LTP family. As to expression, expressed in phloem. Also detected in the epidermis near the vascular tissues in resistant plants infected by Hessian fly larvae.

In terms of biological role, plant non-specific lipid-transfer proteins transfer phospholipids as well as galactolipids across membranes. May play a role in wax or cutin deposition in the cell walls of expanding epidermal cells and certain secretory tissues. In Triticum aestivum (Wheat), this protein is Probable non-specific lipid-transfer protein 3 (LTP3).